Here is a 335-residue protein sequence, read N- to C-terminus: Glucokinase (335 aa).

11 to 16 (ADIGGT) is a binding site for ATP.

The protein belongs to the bacterial glucokinase family.

The protein localises to the cytoplasm. It catalyses the reaction D-glucose + ATP = D-glucose 6-phosphate + ADP + H(+). The chain is Glucokinase from Xanthomonas campestris pv. campestris (strain B100).